The following is a 414-amino-acid chain: Histidine--tRNA ligase (414 aa).

This sequence belongs to the class-II aminoacyl-tRNA synthetase family. In terms of assembly, homodimer.

The protein resides in the cytoplasm. The enzyme catalyses tRNA(His) + L-histidine + ATP = L-histidyl-tRNA(His) + AMP + diphosphate + H(+). The chain is Histidine--tRNA ligase from Synechococcus sp. (strain RCC307).